Consider the following 525-residue polypeptide: Bifunctional purine biosynthesis protein PurH (525 aa).

Residues 1–149 form the MGS-like domain; sequence MSDPVIKRAL…KNNESVTVVT (149 aa).

Belongs to the PurH family.

It carries out the reaction (6R)-10-formyltetrahydrofolate + 5-amino-1-(5-phospho-beta-D-ribosyl)imidazole-4-carboxamide = 5-formamido-1-(5-phospho-D-ribosyl)imidazole-4-carboxamide + (6S)-5,6,7,8-tetrahydrofolate. The enzyme catalyses IMP + H2O = 5-formamido-1-(5-phospho-D-ribosyl)imidazole-4-carboxamide. Its pathway is purine metabolism; IMP biosynthesis via de novo pathway; 5-formamido-1-(5-phospho-D-ribosyl)imidazole-4-carboxamide from 5-amino-1-(5-phospho-D-ribosyl)imidazole-4-carboxamide (10-formyl THF route): step 1/1. It functions in the pathway purine metabolism; IMP biosynthesis via de novo pathway; IMP from 5-formamido-1-(5-phospho-D-ribosyl)imidazole-4-carboxamide: step 1/1. This Prosthecochloris aestuarii (strain DSM 271 / SK 413) protein is Bifunctional purine biosynthesis protein PurH.